Consider the following 166-residue polypeptide: Putative transmembrane protein encoded by LINC00477 (166 aa).

The N-linked (GlcNAc...) asparagine glycan is linked to Asn-7. 3 helical membrane passes run 15 to 35 (VSSF…FFLC), 41 to 61 (MTGC…VLGP), and 63 to 83 (PMGM…RFLG). The interval 127–166 (LPVPHPPSPLSKCPQHPRPRRTKGPGLRKLWGPGPPFFPS) is disordered.

Its subcellular location is the membrane. This Homo sapiens (Human) protein is Putative transmembrane protein encoded by LINC00477 (LINC00477).